A 93-amino-acid polypeptide reads, in one-letter code: MATFKKFNKDKRPKRNTQSLLFKRKRFCRFTVAGVEEIDYKDVDTLRDFIAENGKIIPARLTGTRAIYQRQLNTAIKRARFLALVPYSDQHKI.

The protein belongs to the bacterial ribosomal protein bS18 family. Part of the 30S ribosomal subunit. Forms a tight heterodimer with protein bS6.

In terms of biological role, binds as a heterodimer with protein bS6 to the central domain of the 16S rRNA, where it helps stabilize the platform of the 30S subunit. The polypeptide is Small ribosomal subunit protein bS18 (Paracidovorax citrulli (strain AAC00-1) (Acidovorax citrulli)).